Reading from the N-terminus, the 260-residue chain is Thymidylate synthase (260 aa).

The protein operates within pyrimidine metabolism; dTTP biosynthesis. Functionally, is able to catalyze the biosynthesis of dTMP using dUMP, tetrahydrofolate and formaldehyde in vitro, i.e. a reaction equivalent to that catalyzed by bacterial thymidylate synthases (EC 2.1.1.45). However, M.jannaschii like most methanogenic Archaea lacks folates, thus the physiological cosubstrate is unknown but is likely one of the non-methylated methanopterin biosynthetic intermediates. The sequence is that of Thymidylate synthase from Methanocaldococcus jannaschii (strain ATCC 43067 / DSM 2661 / JAL-1 / JCM 10045 / NBRC 100440) (Methanococcus jannaschii).